A 938-amino-acid polypeptide reads, in one-letter code: Isoleucine--tRNA ligase (938 aa).

The 'HIGH' region motif lies at 58 to 68; the sequence is PYANGHLHMGH. Glutamate 566 is a binding site for L-isoleucyl-5'-AMP. The 'KMSKS' region signature appears at 607-611; sequence KMSKS. Lysine 610 lines the ATP pocket. Zn(2+) contacts are provided by cysteine 906, cysteine 909, cysteine 926, and cysteine 929.

This sequence belongs to the class-I aminoacyl-tRNA synthetase family. IleS type 1 subfamily. In terms of assembly, monomer. Zn(2+) serves as cofactor.

The protein resides in the cytoplasm. It catalyses the reaction tRNA(Ile) + L-isoleucine + ATP = L-isoleucyl-tRNA(Ile) + AMP + diphosphate. Catalyzes the attachment of isoleucine to tRNA(Ile). As IleRS can inadvertently accommodate and process structurally similar amino acids such as valine, to avoid such errors it has two additional distinct tRNA(Ile)-dependent editing activities. One activity is designated as 'pretransfer' editing and involves the hydrolysis of activated Val-AMP. The other activity is designated 'posttransfer' editing and involves deacylation of mischarged Val-tRNA(Ile). The protein is Isoleucine--tRNA ligase of Desulfovibrio desulfuricans (strain ATCC 27774 / DSM 6949 / MB).